Here is a 105-residue protein sequence, read N- to C-terminus: Large ribosomal subunit protein uL24 (105 aa).

Belongs to the universal ribosomal protein uL24 family. Part of the 50S ribosomal subunit.

One of two assembly initiator proteins, it binds directly to the 5'-end of the 23S rRNA, where it nucleates assembly of the 50S subunit. In terms of biological role, one of the proteins that surrounds the polypeptide exit tunnel on the outside of the subunit. This chain is Large ribosomal subunit protein uL24, found in Mycobacterium avium (strain 104).